Consider the following 299-residue polypeptide: Protease HtpX homolog (299 aa).

The next 2 membrane-spanning stretches (helical) occupy residues 16–36 (VMAAFVILLAVIGLAVGYVFF) and 38–58 (SAIAGLLVALIAAVFYMVLMI). His144 is a Zn(2+) binding site. The active site involves Glu145. His148 serves as a coordination point for Zn(2+). Transmembrane regions (helical) follow at residues 159–179 (IALALTAAISLLVNWGMNAFW) and 198–218 (VLLMILAIVVIILAPLAASLV). Glu227 contributes to the Zn(2+) binding site.

It belongs to the peptidase M48B family. The cofactor is Zn(2+).

The protein resides in the cell membrane. The protein is Protease HtpX homolog of Lactiplantibacillus plantarum (strain ATCC BAA-793 / NCIMB 8826 / WCFS1) (Lactobacillus plantarum).